The sequence spans 754 residues: Probable TonB-dependent siderophore receptor PirA (754 aa).

Positions Met-1 to Ala-24 are cleaved as a signal peptide. Positions Glu-54 to Lys-181 constitute a TBDR plug domain. In terms of domain architecture, TBDR beta-barrel spans Glu-186–Phe-754. Residues Val-404 to Gly-414 show a composition bias toward polar residues. A disordered region spans residues Val-404–Gly-424. Cys-511 and Cys-519 form a disulfide bridge. A TonB C-terminal box motif is present at residues Gln-737 to Phe-754.

The protein belongs to the TonB-dependent receptor family.

The protein localises to the cell outer membrane. In terms of biological role, probably involved in the initial step of iron uptake by binding iron chelating siderophores, thereby allowing extraction of iron from the environment. May bind the siderophore, ferric enterobactin, with micromolar affinity. The sequence is that of Probable TonB-dependent siderophore receptor PirA from Acinetobacter baumannii (strain ATCC 19606 / DSM 30007 / JCM 6841 / CCUG 19606 / CIP 70.34 / NBRC 109757 / NCIMB 12457 / NCTC 12156 / 81).